Consider the following 420-residue polypeptide: Phosphoribosylamine--glycine ligase (420 aa).

The ATP-grasp domain maps to 108-314 (KEIMVKYGVP…FAQNITDILD (207 aa)). Residue 134 to 195 (IEKHGAPIVV…EEFLEGEEFS (62 aa)) participates in ATP binding. 2 residues coordinate Mg(2+): Glu-284 and Asn-286.

The protein belongs to the GARS family. Requires Mg(2+) as cofactor. Mn(2+) is required as a cofactor.

The catalysed reaction is 5-phospho-beta-D-ribosylamine + glycine + ATP = N(1)-(5-phospho-beta-D-ribosyl)glycinamide + ADP + phosphate + H(+). The protein operates within purine metabolism; IMP biosynthesis via de novo pathway; N(1)-(5-phospho-D-ribosyl)glycinamide from 5-phospho-alpha-D-ribose 1-diphosphate: step 2/2. The chain is Phosphoribosylamine--glycine ligase from Streptococcus pneumoniae serotype 4 (strain ATCC BAA-334 / TIGR4).